A 182-amino-acid chain; its full sequence is Small ribosomal subunit protein uS5 (182 aa).

The S5 DRBM domain maps to 16–79; the sequence is FVDRLVHINR…EAAKRGMIYV (64 aa).

The protein belongs to the universal ribosomal protein uS5 family. In terms of assembly, part of the 30S ribosomal subunit. Contacts proteins S4 and S8.

In terms of biological role, with S4 and S12 plays an important role in translational accuracy. Its function is as follows. Located at the back of the 30S subunit body where it stabilizes the conformation of the head with respect to the body. The polypeptide is Small ribosomal subunit protein uS5 (Bartonella quintana (strain Toulouse) (Rochalimaea quintana)).